The following is a 599-amino-acid chain: Elongation factor 4 (599 aa).

The 183-residue stretch at 2–184 folds into the tr-type G domain; it reads KNIRNFSIIA…RLVRDIPPPE (183 aa). GTP-binding positions include 14-19 and 131-134; these read DHGKST and NKID.

It belongs to the TRAFAC class translation factor GTPase superfamily. Classic translation factor GTPase family. LepA subfamily.

The protein resides in the cell inner membrane. It catalyses the reaction GTP + H2O = GDP + phosphate + H(+). Functionally, required for accurate and efficient protein synthesis under certain stress conditions. May act as a fidelity factor of the translation reaction, by catalyzing a one-codon backward translocation of tRNAs on improperly translocated ribosomes. Back-translocation proceeds from a post-translocation (POST) complex to a pre-translocation (PRE) complex, thus giving elongation factor G a second chance to translocate the tRNAs correctly. Binds to ribosomes in a GTP-dependent manner. The protein is Elongation factor 4 of Escherichia coli (strain UTI89 / UPEC).